Reading from the N-terminus, the 205-residue chain is COP9 signalosome complex subunit 7 (205 aa).

Residues 1 to 135 form the PCI domain; it reads MEEKISQAID…QTLHVSWALE (135 aa). Residue serine 183 is modified to Phosphoserine.

Belongs to the CSN7/EIF3M family. CSN7 subfamily. As to quaternary structure, component of the COP9 signalosome (CSN) complex.

Functionally, component of the COP9 signalosome (CSN) complex that acts as an regulator of the ubiquitin (Ubl) conjugation pathway by mediating the deneddylation of the cullin subunit of SCF-type E3 ubiquitin-protein ligase complexes. The sequence is that of COP9 signalosome complex subunit 7 (csn71) from Schizosaccharomyces pombe (strain 972 / ATCC 24843) (Fission yeast).